A 165-amino-acid chain; its full sequence is Nucleotide-binding protein LBF_1338 (165 aa).

This sequence belongs to the YajQ family.

Functionally, nucleotide-binding protein. This is Nucleotide-binding protein LBF_1338 from Leptospira biflexa serovar Patoc (strain Patoc 1 / Ames).